Reading from the N-terminus, the 292-residue chain is tRNA-cytidine(32) 2-sulfurtransferase (292 aa).

A PP-loop motif motif is present at residues 53-58; it reads SGGKDS. Positions 128, 131, and 219 each coordinate [4Fe-4S] cluster.

The protein belongs to the TtcA family. Homodimer. Mg(2+) serves as cofactor. It depends on [4Fe-4S] cluster as a cofactor.

The protein localises to the cytoplasm. It carries out the reaction cytidine(32) in tRNA + S-sulfanyl-L-cysteinyl-[cysteine desulfurase] + AH2 + ATP = 2-thiocytidine(32) in tRNA + L-cysteinyl-[cysteine desulfurase] + A + AMP + diphosphate + H(+). It participates in tRNA modification. Its function is as follows. Catalyzes the ATP-dependent 2-thiolation of cytidine in position 32 of tRNA, to form 2-thiocytidine (s(2)C32). The sulfur atoms are provided by the cysteine/cysteine desulfurase (IscS) system. The chain is tRNA-cytidine(32) 2-sulfurtransferase from Cereibacter sphaeroides (strain ATCC 17023 / DSM 158 / JCM 6121 / CCUG 31486 / LMG 2827 / NBRC 12203 / NCIMB 8253 / ATH 2.4.1.) (Rhodobacter sphaeroides).